The sequence spans 248 residues: Acetylglutamate kinase (248 aa).

Substrate is bound by residues 41 to 42 (GG), R63, and N155.

The protein belongs to the acetylglutamate kinase family. ArgB subfamily.

It localises to the cytoplasm. It carries out the reaction N-acetyl-L-glutamate + ATP = N-acetyl-L-glutamyl 5-phosphate + ADP. Its pathway is amino-acid biosynthesis; L-arginine biosynthesis; N(2)-acetyl-L-ornithine from L-glutamate: step 2/4. Catalyzes the ATP-dependent phosphorylation of N-acetyl-L-glutamate. In Lactiplantibacillus plantarum (strain ATCC BAA-793 / NCIMB 8826 / WCFS1) (Lactobacillus plantarum), this protein is Acetylglutamate kinase.